A 404-amino-acid chain; its full sequence is Activity-regulated cytoskeleton-associated protein (404 aa).

Residues 51–78 (EVSKQVERELKGLQKSVGKLENNLEDHV) adopt a coiled-coil conformation. A disordered region spans residues 351–404 (VQGNMDHSEEPSPQRTPEIQSGDSVESMPPSTTASPVPSNGTQPEPPSPPATVI). Polar residues predominate over residues 363 to 393 (PQRTPEIQSGDSVESMPPSTTASPVPSNGTQ). A compositionally biased stretch (pro residues) spans 394–404 (PEPPSPPATVI).

It belongs to the ARC/ARG3.1 family. As to quaternary structure, homooligomer; homooligomerizes into virion-like capsids. In terms of processing, palmitoylation anchors the protein into the membrane by allowing direct insertion into the hydrophobic core of the lipid bilayer. As to expression, expressed at various levels throughout the brain.

The protein resides in the extracellular vesicle membrane. Its subcellular location is the postsynaptic cell membrane. The protein localises to the synapse. It localises to the postsynaptic density. It is found in the early endosome membrane. The protein resides in the cell projection. Its subcellular location is the dendrite. The protein localises to the cytoplasm. It localises to the cytoskeleton. It is found in the cell cortex. The protein resides in the dendritic spine. In terms of biological role, master regulator of synaptic plasticity that self-assembles into virion-like capsids that encapsulate RNAs and mediate intercellular RNA transfer in the nervous system. ARC protein is released from neurons in extracellular vesicles that mediate the transfer of ARC mRNA into new target cells, where ARC mRNA can undergo activity-dependent translation. ARC capsids are endocytosed and are able to transfer ARC mRNA into the cytoplasm of neurons. Acts as a key regulator of synaptic plasticity: required for protein synthesis-dependent forms of long-term potentiation (LTP) and depression (LTD) and for the formation of long-term memory. Regulates synaptic plasticity by promoting endocytosis of AMPA receptors (AMPARs) in response to synaptic activity: this endocytic pathway maintains levels of surface AMPARs in response to chronic changes in neuronal activity through synaptic scaling, thereby contributing to neuronal homeostasis. Acts as a postsynaptic mediator of activity-dependent synapse elimination in the developing cerebellum by mediating elimination of surplus climbing fiber synapses. Accumulates at weaker synapses, probably to prevent their undesired enhancement. This suggests that ARC-containing virion-like capsids may be required to eliminate synaptic material. The chain is Activity-regulated cytoskeleton-associated protein from Gallus gallus (Chicken).